The primary structure comprises 319 residues: MTVLAWCIAWLLDFVIGDPQNWPHPVRWIGNLISATQRVVRRYCHSDRSLRIGGAVMWLVVVGVTWAVSWGVLALASEIHPWFGWLVEIWMIFTVLAGRCLANAARDVERPLRAGDLAESREKLSWIVGRDTSQLQPEQVNRAVVETVAENTVDGIIAPLFFLFLGGAPLAMAYKAVNTLDSMVGYKHEKYRAIGMVSARLDDIANVIPARLSWLLLSIAAALCRYDGYRALHIGWRDRYNHSSPNCAWSEASVAGALGIRLGGPNDYFGERVEKPWIGDAQRGISVDDISRTIRLMWVASTLALALFIAVRCLLVGAA.

Transmembrane regions (helical) follow at residues 55–75 (AVMW…VLAL), 78–98 (EIHP…VLAG), 153–173 (VDGI…LAMA), and 296–316 (LMWV…CLLV).

It belongs to the CobD/CbiB family.

Its subcellular location is the cell membrane. Its pathway is cofactor biosynthesis; adenosylcobalamin biosynthesis. Converts cobyric acid to cobinamide by the addition of aminopropanol on the F carboxylic group. The polypeptide is Cobalamin biosynthesis protein CobD (Citrobacter koseri (strain ATCC BAA-895 / CDC 4225-83 / SGSC4696)).